The chain runs to 205 residues: Protease (205 aa).

Residues His-55, Asp-72, and Cys-122 contribute to the active site.

This sequence belongs to the peptidase C5 family. In terms of assembly, interacts with protease cofactor pVI-C; this interaction is necessary for protease activation.

It localises to the virion. Its subcellular location is the host nucleus. The catalysed reaction is Cleaves proteins of the adenovirus and its host cell at two consensus sites: -Yaa-Xaa-Gly-Gly-|-Xaa- and -Yaa-Xaa-Gly-Xaa-|-Gly- (in which Yaa is Met, Ile or Leu, and Xaa is any amino acid).. Requires DNA and protease cofactor for maximal activation. Inside nascent virions, becomes partially activated by binding to the viral DNA, allowing it to cleave the cofactor that binds to the protease and fully activates it. Actin, like the viral protease cofactor, seems to act as a cofactor in the cleavage of cytokeratin 18 and of actin itself. Functionally, cleaves viral precursor proteins (pTP, pIIIa, pVI, pVII, pVIII, and pX) inside newly assembled particles giving rise to mature virions. Protease complexed to its cofactor slides along the viral DNA to specifically locate and cleave the viral precursors. Mature virions have a weakened organization compared to the unmature virions, thereby facilitating subsequent uncoating. Without maturation, the particle lacks infectivity and is unable to uncoat. Late in adenovirus infection, in the cytoplasm, may participate in the cytoskeleton destruction. Cleaves host cell cytoskeletal keratins K7 and K18. This Galliformes (FAdV-8) protein is Protease.